The sequence spans 109 residues: Homeobox protein E30 (109 aa).

Residues 1–12 are compositionally biased toward basic residues; that stretch reads GPRTRRVKRSHN. Positions 1-27 are disordered; that stretch reads GPRTRRVKRSHNGKNGSPEEKRPRTAF. A DNA-binding region (homeobox) is located at residues 20 to 79; it reads EKRPRTAFSAEQLARLKREFAENRYLTERRRQQLSRDLGLTEAQIKIWFQNKRAKIKKAS.

The protein belongs to the engrailed homeobox family.

Its subcellular location is the nucleus. The polypeptide is Homeobox protein E30 (Apis mellifera (Honeybee)).